The chain runs to 521 residues: Myocyte-specific enhancer factor 2D (521 aa).

In terms of domain architecture, MADS-box spans 3–57 (RKKIQIQRITDERNRQVTFTKRKFGLMKKAYELSVLCDCEIALIIFNHSNKLFQY). Positions 58-86 (ASTDMDKVLLKYTEYNEPHESRTNADIIE) form a DNA-binding region, mef2-type. Residues Ser98, Ser106, and Ser110 each carry the phosphoserine modification. Phosphoserine; by PKA is present on Ser121. Residues 174-207 (TDPRLLSPQQPALQRNSVSPGLPQRPASAGAMLG) are disordered. Ser180 is subject to Phosphoserine; by MAPK7. The span at 180-192 (SPQQPALQRNSVS) shows a compositional bias: polar residues. Ser190 is modified (phosphoserine; by PKA). A Phosphoserine modification is found at Ser231. The disordered stretch occupies residues 244–266 (NKVIPAKSPPPPTHSTQLGAPSR). Lys245 is modified (N6-acetyllysine). Residue Ser251 is modified to Phosphoserine. Positions 286 to 292 (TEDHLDL) are beta domain. Disordered regions lie at residues 357–407 (SLGN…QSHL) and 437–521 (SIKS…WTLK). Pro residues predominate over residues 373-400 (PQQPQPPQQQPPQPQQPQPQQPQQPQQP). The residue at position 439 (Lys439) is an N6-acetyllysine; alternate. A Glycyl lysine isopeptide (Lys-Gly) (interchain with G-Cter in SUMO); alternate cross-link involves residue Lys439. Ser444 carries the post-translational modification Phosphoserine.

Belongs to the MEF2 family. In terms of assembly, interacts with MYOG. Forms a complex with class II HDACs in undifferentiating cells. On myogenic differentiation, HDACs are released into the cytoplasm allowing MEF2s to interact with other proteins for activation. Interacts with HDAC4 (in undifferentiating cells); the interaction translocates MEF2D to nuclear dots. Forms a heterodimer with MEF2A. Interacts with MAPK7; the interaction phosphorylates but does not activate MEF2D. Interacts with CCAR2 and HDAC3. Phosphorylated on Ser-444 by CDK5 is required for Lys-439 sumoylation and inhibits transcriptional activity. In neurons, enhanced CDK5 activity induced by neurotoxins promotes caspase 3-mediated cleavage leading to neuron apoptosis. Phosphorylation on Ser-180 can be enhanced by EGF. Phosphorylated and activated by CaMK4. Post-translationally, acetylated on Lys-439 by CREBBP. Acetylated by EP300. Deacetylated by SIRT1 and HDAC3. In terms of processing, sumoylated on Lys-439 with SUMO2 but not SUMO1; which inhibits transcriptional activity and myogenic activity. Desumoylated by SENP3. Proteolytically cleaved in cerebellar granule neurons on several sites by caspase 7 following neurotoxicity. Preferentially cleaves the CDK5-mediated hyperphosphorylated form which leads to neuron apoptosis and transcriptional inactivation.

It localises to the nucleus. Functionally, transcriptional activator which binds specifically to the MEF2 element, 5'-YTA[AT](4)TAR-3', found in numerous muscle-specific, growth factor- and stress-induced genes. Mediates cellular functions not only in skeletal and cardiac muscle development, but also in neuronal differentiation and survival. Plays diverse roles in the control of cell growth, survival and apoptosis via p38 MAPK signaling in muscle-specific and/or growth factor-related transcription. Plays a critical role in the regulation of neuronal apoptosis. The protein is Myocyte-specific enhancer factor 2D (MEF2D) of Homo sapiens (Human).